A 165-amino-acid polypeptide reads, in one-letter code: Probable chemoreceptor glutamine deamidase CheD (165 aa).

Belongs to the CheD family.

It catalyses the reaction L-glutaminyl-[protein] + H2O = L-glutamyl-[protein] + NH4(+). Functionally, probably deamidates glutamine residues to glutamate on methyl-accepting chemotaxis receptors (MCPs), playing an important role in chemotaxis. This is Probable chemoreceptor glutamine deamidase CheD from Geobacillus kaustophilus (strain HTA426).